A 129-amino-acid chain; its full sequence is Phosphoribosyl-AMP cyclohydrolase (129 aa).

Asp-85 is a Mg(2+) binding site. Residue Cys-86 coordinates Zn(2+). Mg(2+)-binding residues include Asp-87 and Asp-89. Zn(2+)-binding residues include Cys-102 and Cys-109.

Belongs to the PRA-CH family. As to quaternary structure, homodimer. It depends on Mg(2+) as a cofactor. Requires Zn(2+) as cofactor.

It localises to the cytoplasm. It carries out the reaction 1-(5-phospho-beta-D-ribosyl)-5'-AMP + H2O = 1-(5-phospho-beta-D-ribosyl)-5-[(5-phospho-beta-D-ribosylamino)methylideneamino]imidazole-4-carboxamide. The protein operates within amino-acid biosynthesis; L-histidine biosynthesis; L-histidine from 5-phospho-alpha-D-ribose 1-diphosphate: step 3/9. Catalyzes the hydrolysis of the adenine ring of phosphoribosyl-AMP. The sequence is that of Phosphoribosyl-AMP cyclohydrolase from Methanococcus maripaludis (strain C7 / ATCC BAA-1331).